The sequence spans 227 residues: Phosphoribosylformylglycinamidine synthase subunit PurQ (227 aa).

The 223-residue stretch at 3-225 (FAVIVFPGSN…VKQGAHHVKT (223 aa)) folds into the Glutamine amidotransferase type-1 domain. The Nucleophile role is filled by C86. Active-site residues include H194 and E196.

In terms of assembly, part of the FGAM synthase complex composed of 1 PurL, 1 PurQ and 2 PurS subunits.

It localises to the cytoplasm. It catalyses the reaction N(2)-formyl-N(1)-(5-phospho-beta-D-ribosyl)glycinamide + L-glutamine + ATP + H2O = 2-formamido-N(1)-(5-O-phospho-beta-D-ribosyl)acetamidine + L-glutamate + ADP + phosphate + H(+). The enzyme catalyses L-glutamine + H2O = L-glutamate + NH4(+). Its pathway is purine metabolism; IMP biosynthesis via de novo pathway; 5-amino-1-(5-phospho-D-ribosyl)imidazole from N(2)-formyl-N(1)-(5-phospho-D-ribosyl)glycinamide: step 1/2. In terms of biological role, part of the phosphoribosylformylglycinamidine synthase complex involved in the purines biosynthetic pathway. Catalyzes the ATP-dependent conversion of formylglycinamide ribonucleotide (FGAR) and glutamine to yield formylglycinamidine ribonucleotide (FGAM) and glutamate. The FGAM synthase complex is composed of three subunits. PurQ produces an ammonia molecule by converting glutamine to glutamate. PurL transfers the ammonia molecule to FGAR to form FGAM in an ATP-dependent manner. PurS interacts with PurQ and PurL and is thought to assist in the transfer of the ammonia molecule from PurQ to PurL. The chain is Phosphoribosylformylglycinamidine synthase subunit PurQ from Exiguobacterium sibiricum (strain DSM 17290 / CCUG 55495 / CIP 109462 / JCM 13490 / 255-15).